A 795-amino-acid polypeptide reads, in one-letter code: Probable alpha,alpha-trehalose-phosphate synthase [UDP-forming] 4 (795 aa).

Residues 4 to 469 (PRLLVVSMSL…WADDFMKLTL (466 aa)) are glycosyltransferase.

The protein in the N-terminal section; belongs to the glycosyltransferase 20 family. This sequence in the C-terminal section; belongs to the trehalose phosphatase family.

It carries out the reaction D-glucose 6-phosphate + UDP-alpha-D-glucose = alpha,alpha-trehalose 6-phosphate + UDP + H(+). This is Probable alpha,alpha-trehalose-phosphate synthase [UDP-forming] 4 (TPS4) from Arabidopsis thaliana (Mouse-ear cress).